The sequence spans 433 residues: Oxysterol-binding protein-like protein OBPa (433 aa).

It belongs to the OSBP family.

The polypeptide is Oxysterol-binding protein-like protein OBPa (OBPA) (Candida albicans (strain SC5314 / ATCC MYA-2876) (Yeast)).